A 49-amino-acid chain; its full sequence is MRNKAKGFPNQVNHKFEGEPGATDAYASKRPNGETNTRPQERMRASGKR.

The tract at residues 1-49 is disordered; the sequence is MRNKAKGFPNQVNHKFEGEPGATDAYASKRPNGETNTRPQERMRASGKR. Positions 39-49 are enriched in basic and acidic residues; that stretch reads PQERMRASGKR.

It belongs to the SspK family.

The protein localises to the spore core. The polypeptide is Small, acid-soluble spore protein K (Bacillus pumilus (strain SAFR-032)).